The following is a 434-amino-acid chain: Histidinol dehydrogenase (434 aa).

The NAD(+) site is built by Y130, Q188, and N211. Substrate is bound by residues S237, Q259, and H262. Zn(2+) is bound by residues Q259 and H262. Residues E326 and H327 each act as proton acceptor in the active site. The substrate site is built by H327, D360, E414, and H419. Residue D360 participates in Zn(2+) binding. H419 contacts Zn(2+).

This sequence belongs to the histidinol dehydrogenase family. Homodimer. Zn(2+) serves as cofactor.

It catalyses the reaction L-histidinol + 2 NAD(+) + H2O = L-histidine + 2 NADH + 3 H(+). Its pathway is amino-acid biosynthesis; L-histidine biosynthesis; L-histidine from 5-phospho-alpha-D-ribose 1-diphosphate: step 9/9. In terms of biological role, catalyzes the sequential NAD-dependent oxidations of L-histidinol to L-histidinaldehyde and then to L-histidine. This chain is Histidinol dehydrogenase, found in Shigella sonnei (strain Ss046).